The sequence spans 399 residues: Dual-specificity RNA methyltransferase RlmN (399 aa).

The active-site Proton acceptor is Glu122. Residues 128 to 371 (ETDRGTLCVS…VRTPRGRDIL (244 aa)) form the Radical SAM core domain. Cys135 and Cys374 are oxidised to a cystine. Cys142, Cys146, and Cys149 together coordinate [4Fe-4S] cluster. Residues 200–201 (GE), Ser232, 254–256 (SLH), and Asn331 each bind S-adenosyl-L-methionine. Cys374 acts as the S-methylcysteine intermediate in catalysis.

The protein belongs to the radical SAM superfamily. RlmN family. Requires [4Fe-4S] cluster as cofactor.

Its subcellular location is the cytoplasm. It carries out the reaction adenosine(2503) in 23S rRNA + 2 reduced [2Fe-2S]-[ferredoxin] + 2 S-adenosyl-L-methionine = 2-methyladenosine(2503) in 23S rRNA + 5'-deoxyadenosine + L-methionine + 2 oxidized [2Fe-2S]-[ferredoxin] + S-adenosyl-L-homocysteine. The catalysed reaction is adenosine(37) in tRNA + 2 reduced [2Fe-2S]-[ferredoxin] + 2 S-adenosyl-L-methionine = 2-methyladenosine(37) in tRNA + 5'-deoxyadenosine + L-methionine + 2 oxidized [2Fe-2S]-[ferredoxin] + S-adenosyl-L-homocysteine. In terms of biological role, specifically methylates position 2 of adenine 2503 in 23S rRNA and position 2 of adenine 37 in tRNAs. m2A2503 modification seems to play a crucial role in the proofreading step occurring at the peptidyl transferase center and thus would serve to optimize ribosomal fidelity. The protein is Dual-specificity RNA methyltransferase RlmN of Rhodopseudomonas palustris (strain TIE-1).